The chain runs to 603 residues: Pyruvate decarboxylase 4 (603 aa).

D65 and H152 together coordinate substrate. Residues 430–512 form a thiamine pyrophosphate binding region; that stretch reads DSWFNCQKLK…FLINNGGYTI (83 aa). 3 residues coordinate Mg(2+): D480, N507, and G509. E513 provides a ligand contact to substrate.

Belongs to the TPP enzyme family. Homotetramer. A metal cation serves as cofactor. Requires thiamine diphosphate as cofactor. As to expression, expressed in shoots and at lowe levels in roots, flowers and siliques.

It catalyses the reaction a 2-oxocarboxylate + H(+) = an aldehyde + CO2. This is Pyruvate decarboxylase 4 (PDC4) from Arabidopsis thaliana (Mouse-ear cress).